A 70-amino-acid chain; its full sequence is ATP synthase subunit c (70 aa).

Helical transmembrane passes span 3–23 and 47–67; these read FIAA…GNGM and FIGV…AFML.

Belongs to the ATPase C chain family. As to quaternary structure, F-type ATPases have 2 components, F(1) - the catalytic core - and F(0) - the membrane proton channel. F(1) has five subunits: alpha(3), beta(3), gamma(1), delta(1), epsilon(1). F(0) has three main subunits: a(1), b(2) and c(10-14). The alpha and beta chains form an alternating ring which encloses part of the gamma chain. F(1) is attached to F(0) by a central stalk formed by the gamma and epsilon chains, while a peripheral stalk is formed by the delta and b chains.

It is found in the cell membrane. Its function is as follows. F(1)F(0) ATP synthase produces ATP from ADP in the presence of a proton or sodium gradient. F-type ATPases consist of two structural domains, F(1) containing the extramembraneous catalytic core and F(0) containing the membrane proton channel, linked together by a central stalk and a peripheral stalk. During catalysis, ATP synthesis in the catalytic domain of F(1) is coupled via a rotary mechanism of the central stalk subunits to proton translocation. In terms of biological role, key component of the F(0) channel; it plays a direct role in translocation across the membrane. A homomeric c-ring of between 10-14 subunits forms the central stalk rotor element with the F(1) delta and epsilon subunits. The chain is ATP synthase subunit c from Lacticaseibacillus casei (strain BL23) (Lactobacillus casei).